The primary structure comprises 285 residues: Proteasome subunit beta (285 aa).

The propeptide at 1-50 is removed in mature form; by autocatalysis; it reads MTAEHPARLPQAFMTPGSSSFVDFLAAHDPSLLPSSRALPAGSAPPAPHG. Residue Thr51 is the Nucleophile of the active site. The tract at residues 266–285 is disordered; it reads RTRQARSSRSRHGSLGGDLR.

Belongs to the peptidase T1B family. In terms of assembly, the 20S proteasome core is composed of 14 alpha and 14 beta subunits that assemble into four stacked heptameric rings, resulting in a barrel-shaped structure. The two inner rings, each composed of seven catalytic beta subunits, are sandwiched by two outer rings, each composed of seven alpha subunits. The catalytic chamber with the active sites is on the inside of the barrel. Has a gated structure, the ends of the cylinder being occluded by the N-termini of the alpha-subunits. Is capped by the proteasome-associated ATPase, ARC.

It is found in the cytoplasm. It carries out the reaction Cleavage of peptide bonds with very broad specificity.. It functions in the pathway protein degradation; proteasomal Pup-dependent pathway. The formation of the proteasomal ATPase ARC-20S proteasome complex, likely via the docking of the C-termini of ARC into the intersubunit pockets in the alpha-rings, may trigger opening of the gate for substrate entry. Interconversion between the open-gate and close-gate conformations leads to a dynamic regulation of the 20S proteasome proteolysis activity. Its function is as follows. Component of the proteasome core, a large protease complex with broad specificity involved in protein degradation. This Sanguibacter keddieii (strain ATCC 51767 / DSM 10542 / NCFB 3025 / ST-74) protein is Proteasome subunit beta.